A 405-amino-acid chain; its full sequence is Phosphopentomutase (405 aa).

Residues Asp-10, Asp-303, His-308, Asp-344, His-345, and His-356 each contribute to the Mn(2+) site.

Belongs to the phosphopentomutase family. The cofactor is Mn(2+).

The protein localises to the cytoplasm. The catalysed reaction is 2-deoxy-alpha-D-ribose 1-phosphate = 2-deoxy-D-ribose 5-phosphate. It carries out the reaction alpha-D-ribose 1-phosphate = D-ribose 5-phosphate. It participates in carbohydrate degradation; 2-deoxy-D-ribose 1-phosphate degradation; D-glyceraldehyde 3-phosphate and acetaldehyde from 2-deoxy-alpha-D-ribose 1-phosphate: step 1/2. In terms of biological role, isomerase that catalyzes the conversion of deoxy-ribose 1-phosphate (dRib-1-P) and ribose 1-phosphate (Rib-1-P) to deoxy-ribose 5-phosphate (dRib-5-P) and ribose 5-phosphate (Rib-5-P), respectively. In Shewanella frigidimarina (strain NCIMB 400), this protein is Phosphopentomutase.